Here is a 382-residue protein sequence, read N- to C-terminus: Nucleoprotein (382 aa).

2 disordered regions span residues 1–29 (MANQGQRVSWGDESTKTRGRSNSRGRKNN) and 150–240 (QLEV…WKRT). A Phosphoserine; by host modification is found at Ser-9. The span at 17–27 (TRGRSNSRGRK) shows a compositional bias: basic residues. The region spanning 31–153 (IPLSFFNPIT…KVPGEFQLEV (123 aa)) is the CoV N NTD domain. The interval 33-159 (LSFFNPITLQ…QLEVNQSRDN (127 aa)) is RNA-binding. The span at 154–163 (NQSRDNSRSR) shows a compositional bias: low complexity. A Phosphoserine; by host modification is found at Ser-156. Positions 164 to 176 (SQSRSRSRNRSQS) are enriched in basic residues. The segment covering 201-235 (LGVDTEKQQQRSRSKSKERSNSKTRDTTPKNENKH) has biased composition (basic and acidic residues). In terms of domain architecture, CoV N CTD spans 224–337 (TRDTTPKNEN…AYARPSEVAK (114 aa)). Residues 231–334 (NENKHTWKRT…QINAYARPSE (104 aa)) are dimerization. 2 positions are modified to phosphoserine; by host: Ser-254 and Ser-256. A disordered region spans residues 328–358 (AYARPSEVAKEQRKRKSRSKSAERSEQDVVP).

This sequence belongs to the alphacoronavirus nucleocapsid protein family. In terms of assembly, homooligomer. Both monomeric and oligomeric forms interact with RNA. Interacts with protein M. Interacts with NSP3; this interaction serves to tether the genome to the newly translated replicase-transcriptase complex at a very early stage of infection. In terms of processing, ADP-ribosylated. The ADP-ribosylation is retained in the virion during infection. Phosphorylated on serine and threonine residues.

Its subcellular location is the virion. The protein resides in the host endoplasmic reticulum-Golgi intermediate compartment. The protein localises to the host Golgi apparatus. Functionally, packages the positive strand viral genome RNA into a helical ribonucleocapsid (RNP) and plays a fundamental role during virion assembly through its interactions with the viral genome and membrane protein M. Plays an important role in enhancing the efficiency of subgenomic viral RNA transcription as well as viral replication. The sequence is that of Nucleoprotein from Sus scrofa (Pig).